We begin with the raw amino-acid sequence, 180 residues long: Progesterone receptor (180 aa).

The NR C4-type zinc finger occupies 1–11 (KNCPACRLRKC). The segment at residues 1 to 16 (KNCPACRLRKCCQAGM) is a DNA-binding region (nuclear receptor). S60 is subject to Phosphoserine. Residues 63–180 (QEIQLFPPLI…QRMKESSFYS (118 aa)) form the NR LBD domain. Positions 71–180 (LINLLLSIEP…QRMKESSFYS (110 aa)) are AF2; mediates transcriptional activation. R150 is a progesterone binding site.

The protein belongs to the nuclear hormone receptor family. NR3 subfamily. As to quaternary structure, interacts with SMARD1 and UNC45A. Interacts with CUEDC2; the interaction promotes ubiquitination, decreases sumoylation, and represses transcriptional activity. Interacts with PIAS3; the interaction promotes sumoylation of PR in a hormone-dependent manner, inhibits DNA-binding, and alters nuclear export. Interacts with SP1; the interaction requires ligand-induced phosphorylation by ERK1/2-MAPK. Interacts with PRMT2. Interacts with NCOA2 and NCOA1. Interacts with KLF9. Interacts with GTF2B. Phosphorylated on multiple serine sites. Several of these sites are hormone-dependent. In terms of processing, sumoylation is hormone-dependent and represses transcriptional activity. Sumoylation on all three sites is enhanced by PIAS3. Desumoylated by SENP1. Sumoylation is repressed by ubiquitination and modulated by phosphorylation. Post-translationally, ubiquitination is hormone-dependent and represses sumoylation. Palmitoylated by ZDHHC7 and ZDHHC21. Palmitoylation is required for plasma membrane targeting and for rapid intracellular signaling via ERK and AKT kinases and cAMP generation.

Its subcellular location is the nucleus. It is found in the cytoplasm. Its function is as follows. The steroid hormones and their receptors are involved in the regulation of eukaryotic gene expression and affect cellular proliferation and differentiation in target tissues. Transcriptional activator of several progesteron-dependent promoters in a variety of cell types. Involved in activation of SRC-dependent MAPK signaling on hormone stimulation. The sequence is that of Progesterone receptor (PGR) from Notamacropus eugenii (Tammar wallaby).